Here is a 209-residue protein sequence, read N- to C-terminus: Uracil phosphoribosyltransferase (209 aa).

5-phospho-alpha-D-ribose 1-diphosphate contacts are provided by residues R79, R104, and 131–139 (DPMLATGGS). Uracil-binding positions include I194 and 199–201 (GDA). D200 lines the 5-phospho-alpha-D-ribose 1-diphosphate pocket.

The protein belongs to the UPRTase family. It depends on Mg(2+) as a cofactor.

It carries out the reaction UMP + diphosphate = 5-phospho-alpha-D-ribose 1-diphosphate + uracil. The protein operates within pyrimidine metabolism; UMP biosynthesis via salvage pathway; UMP from uracil: step 1/1. Allosterically activated by GTP. Its function is as follows. Catalyzes the conversion of uracil and 5-phospho-alpha-D-ribose 1-diphosphate (PRPP) to UMP and diphosphate. This chain is Uracil phosphoribosyltransferase, found in Streptococcus pyogenes serotype M1.